The following is a 585-amino-acid chain: Glutamine--tRNA ligase (585 aa).

A 'HIGH' region motif is present at residues 51-61 (PEPNGYLHIGH). ATP is bound by residues 52-54 (EPN) and 58-64 (HIGHAKS). The L-glutamine site is built by D84 and Y238. ATP contacts are provided by residues T257 and 292–293 (RL). Residues 299–303 (ITSKR) carry the 'KMSKS' region motif.

This sequence belongs to the class-I aminoacyl-tRNA synthetase family. As to quaternary structure, monomer.

It localises to the cytoplasm. It catalyses the reaction tRNA(Gln) + L-glutamine + ATP = L-glutaminyl-tRNA(Gln) + AMP + diphosphate. This is Glutamine--tRNA ligase from Cupriavidus necator (strain ATCC 17699 / DSM 428 / KCTC 22496 / NCIMB 10442 / H16 / Stanier 337) (Ralstonia eutropha).